Here is a 225-residue protein sequence, read N- to C-terminus: Platelet-derived growth factor subunit B (225 aa).

An N-terminal signal peptide occupies residues 1-12; it reads LPLCCYLRLVSA. Positions 13–73 are cleaved as a propeptide — removed in mature form; that stretch reads EGDPIPEELY…ESESSSRGRR (61 aa). Asn55 carries an N-linked (GlcNAc...) asparagine glycan. 3 disulfides stabilise this stretch: Cys89–Cys133, Cys122–Cys170, and Cys126–Cys172. A propeptide spans 183–225 (removed in mature form); the sequence is RSPGTSREHRAKTPQTRVTVRTVRIRRPPKGKHRKFKHTHDKK.

Belongs to the PDGF/VEGF growth factor family. In terms of assembly, antiparallel homodimer; disulfide-linked. Antiparallel heterodimer with PDGFA; disulfide-linked. The PDGFB homodimer interacts with PDGFRA and PDGFRB homodimers, and with heterodimers formed by PDGFRA and PDGFRB. The heterodimer composed of PDGFA and PDGFB interacts with PDGFRB homodimers, and with heterodimers formed by PDGFRA and PDGFRB. Interacts with XLKD1. Interacts with LRP1. Interacts with SORL1 (via the N-terminal ectodomain). Interacts with CD82; this interaction inhibits PDGFB-mediated signaling pathway. As to expression, expressed in a distinct subpopulation of smooth muscle cells in injured arteries.

It localises to the secreted. Growth factor that plays an essential role in the regulation of embryonic development, cell proliferation, cell migration, survival and chemotaxis. Potent mitogen for cells of mesenchymal origin. Required for normal proliferation and recruitment of pericytes and vascular smooth muscle cells in the central nervous system, skin, lung, heart and placenta. Required for normal blood vessel development, and for normal development of kidney glomeruli. Plays an important role in wound healing. Signaling is modulated by the formation of heterodimers with PDGFA. In Rattus norvegicus (Rat), this protein is Platelet-derived growth factor subunit B (Pdgfb).